A 330-amino-acid chain; its full sequence is BTB/POZ domain-containing adapter for CUL3-mediated RhoA degradation protein 1 (330 aa).

Positions 1 to 34 (MSAEASGSSGGHAVTVSGSSPSSSSHVGEEKPGR) are disordered. One can recognise a BTB domain in the interval 40-108 (KYVKLNVGGT…LRDGTVPLPD (69 aa)). Low complexity predominate over residues 282 to 291 (GGVSSSGAGQ). The segment at 282-304 (GGVSSSGAGQSEEEGAGAGGGDR) is disordered.

Belongs to the BACURD family.

It localises to the nucleus. In terms of biological role, substrate-specific adapter of a BCR (BTB-CUL3-RBX1) E3 ubiquitin-protein ligase complex required for synaptic transmission. The BCR(KCTD13) E3 ubiquitin ligase complex mediates the ubiquitination of RHOA, leading to its degradation by the proteasome, thereby regulating the actin cytoskeleton and promoting synaptic transmission. The chain is BTB/POZ domain-containing adapter for CUL3-mediated RhoA degradation protein 1 from Danio rerio (Zebrafish).